Reading from the N-terminus, the 440-residue chain is Thymidine phosphorylase (440 aa).

The protein belongs to the thymidine/pyrimidine-nucleoside phosphorylase family. Homodimer.

The enzyme catalyses thymidine + phosphate = 2-deoxy-alpha-D-ribose 1-phosphate + thymine. It functions in the pathway pyrimidine metabolism; dTMP biosynthesis via salvage pathway; dTMP from thymine: step 1/2. Functionally, the enzymes which catalyze the reversible phosphorolysis of pyrimidine nucleosides are involved in the degradation of these compounds and in their utilization as carbon and energy sources, or in the rescue of pyrimidine bases for nucleotide synthesis. This chain is Thymidine phosphorylase, found in Escherichia coli O139:H28 (strain E24377A / ETEC).